Consider the following 142-residue polypeptide: Large ribosomal subunit protein uL23 (142 aa).

Belongs to the universal ribosomal protein uL23 family. In terms of assembly, component of the large ribosomal subunit. Mature ribosomes consist of a small (40S) and a large (60S) subunit. The 40S subunit contains about 32 different proteins and 1 molecule of RNA (18S). The 60S subunit contains 45 different proteins and 3 molecules of RNA (25S, 5.8S and 5S).

The protein localises to the cytoplasm. Its function is as follows. Component of the ribosome, a large ribonucleoprotein complex responsible for the synthesis of proteins in the cell. The small ribosomal subunit (SSU) binds messenger RNAs (mRNAs) and translates the encoded message by selecting cognate aminoacyl-transfer RNA (tRNA) molecules. The large subunit (LSU) contains the ribosomal catalytic site termed the peptidyl transferase center (PTC), which catalyzes the formation of peptide bonds, thereby polymerizing the amino acids delivered by tRNAs into a polypeptide chain. The nascent polypeptides leave the ribosome through a tunnel in the LSU and interact with protein factors that function in enzymatic processing, targeting, and the membrane insertion of nascent chains at the exit of the ribosomal tunnel. RPL25 is a major component of the universal docking site for these factors at the polypeptide exit tunnel. This Candida albicans (strain SC5314 / ATCC MYA-2876) (Yeast) protein is Large ribosomal subunit protein uL23.